Reading from the N-terminus, the 416-residue chain is Serine hydroxymethyltransferase (416 aa).

(6S)-5,6,7,8-tetrahydrofolate contacts are provided by residues L121 and 125-127; that span reads GHL. K229 carries the N6-(pyridoxal phosphate)lysine modification.

This sequence belongs to the SHMT family. As to quaternary structure, homodimer. Pyridoxal 5'-phosphate serves as cofactor.

The protein resides in the cytoplasm. It catalyses the reaction (6R)-5,10-methylene-5,6,7,8-tetrahydrofolate + glycine + H2O = (6S)-5,6,7,8-tetrahydrofolate + L-serine. It functions in the pathway one-carbon metabolism; tetrahydrofolate interconversion. It participates in amino-acid biosynthesis; glycine biosynthesis; glycine from L-serine: step 1/1. Its function is as follows. Catalyzes the reversible interconversion of serine and glycine with tetrahydrofolate (THF) serving as the one-carbon carrier. This reaction serves as the major source of one-carbon groups required for the biosynthesis of purines, thymidylate, methionine, and other important biomolecules. Also exhibits THF-independent aldolase activity toward beta-hydroxyamino acids, producing glycine and aldehydes, via a retro-aldol mechanism. The chain is Serine hydroxymethyltransferase from Aromatoleum aromaticum (strain DSM 19018 / LMG 30748 / EbN1) (Azoarcus sp. (strain EbN1)).